We begin with the raw amino-acid sequence, 217 residues long: Large ribosomal subunit protein uL29m (217 aa).

This sequence belongs to the universal ribosomal protein uL29 family. As to quaternary structure, component of the mitochondrial large ribosomal subunit. Mature mitochondrial ribosomes consist of a small (37S) and a large (54S) subunit. The 37S subunit contains at least 33 different proteins and 1 molecule of RNA (15S). The 54S subunit contains at least 45 different proteins and 1 molecule of RNA (21S).

It localises to the mitochondrion. This Neosartorya fischeri (strain ATCC 1020 / DSM 3700 / CBS 544.65 / FGSC A1164 / JCM 1740 / NRRL 181 / WB 181) (Aspergillus fischerianus) protein is Large ribosomal subunit protein uL29m (mrpl4).